The chain runs to 426 residues: Glutamate-1-semialdehyde 2,1-aminomutase (426 aa).

At K265 the chain carries N6-(pyridoxal phosphate)lysine.

This sequence belongs to the class-III pyridoxal-phosphate-dependent aminotransferase family. HemL subfamily. Homodimer. Pyridoxal 5'-phosphate is required as a cofactor.

The protein resides in the cytoplasm. The catalysed reaction is (S)-4-amino-5-oxopentanoate = 5-aminolevulinate. It functions in the pathway porphyrin-containing compound metabolism; protoporphyrin-IX biosynthesis; 5-aminolevulinate from L-glutamyl-tRNA(Glu): step 2/2. The polypeptide is Glutamate-1-semialdehyde 2,1-aminomutase (Erwinia tasmaniensis (strain DSM 17950 / CFBP 7177 / CIP 109463 / NCPPB 4357 / Et1/99)).